Reading from the N-terminus, the 156-residue chain is MGPKLLESRLCLLLLLRLVLMLASCLGQTPSRWFAIQHINNNTNLRCNVEMLRINRFRRTCKGLNTFLHTSFANAVGVCGNPSGLCSDNISRNCHNSSSRVHITVCNITSRRRIPYTQCRYQPRRSVEYYTVACNPRTSLDSPMYPVVPVHLDGTF.

An N-terminal signal peptide occupies residues 1 to 25; sequence MGPKLLESRLCLLLLLRLVLMLASC. Histidine 38 acts as the Proton acceptor in catalysis. Residue asparagine 41 is glycosylated (N-linked (GlcNAc...) asparagine). 4 cysteine pairs are disulfide-bonded: cysteine 47/cysteine 106, cysteine 61/cysteine 119, cysteine 79/cysteine 134, and cysteine 86/cysteine 94. 62 to 66 is a substrate binding site; that stretch reads KGLNT. Asparagine 89, asparagine 96, and asparagine 107 each carry an N-linked (GlcNAc...) asparagine glycan. The active-site Proton donor is histidine 151.

This sequence belongs to the pancreatic ribonuclease family.

The chain is Eosinophil cationic-type ribonuclease 3 (Ear3) from Mus musculus (Mouse).